The chain runs to 78 residues: High temperature lethal protein 1 (78 aa).

Position 2 is an N-acetylserine (Ser-2).

Interacts directly with RSC8. Component of the two forms of the RSC complex composed of at least either RSC1 or RSC2, and ARP7, ARP9, LDB7, NPL6, RSC3, RSC30, RSC4, RSC58, RSC6, RSC8, RSC9, SFH1, STH1, HTL1 and probably RTT102. The complexes interact with histone and histone variant components of centromeric chromatin. Component of a fungal-specific module (HTL1-LDB7-NPL6-RSC3-RSC30) within the RSC complex.

The protein localises to the nucleus. Functionally, required for cell cycle progression through G2/M transition at temperatures higher than 33 degrees Celsius. Component of the chromatin structure-remodeling complex (RSC), which is involved in transcription regulation and nucleosome positioning. RSC is responsible for the transfer of a histone octamer from a nucleosome core particle to naked DNA. The reaction requires ATP and involves an activated RSC-nucleosome intermediate. Remodeling reaction also involves DNA translocation, DNA twist and conformational change. As a reconfigurer of centromeric and flanking nucleosomes, RSC complex is required both for proper kinetochore function in chromosome segregation and, via a PKC1-dependent signaling pathway, for organization of the cellular cytoskeleton. When associated with the RSC complex, may act coordinately with PKC1 to regulate G2/M transition. Together with LDB7, NPL6, RSC3, RSC30 components, defines a fungal-specific module within the RSC complex that plays a role in many cellular functions including the maintenance of cell wall integrity. This is High temperature lethal protein 1 (HTL1) from Saccharomyces cerevisiae (strain ATCC 204508 / S288c) (Baker's yeast).